Reading from the N-terminus, the 255-residue chain is MTSGLILTERKNNVLWVTLNRPKKFNALTRQMFLDLCTVFNDAADDDDIAFVVFTGGKGKYYCAGSDFSPAELSTLTDIQEHGYKLFVDILIAFPKPIIALVNGHAVGVSVTMLGVMDAVIAIDTATFATPFADIGVCPEACSSYTLPRIMGHQKAAALMMFSEKFTAHEAHIAGLVTQILPAATFEKDAKKIIDRYSKLSPITMKVAKELMRTTQIKDELLTVNRKEQVHLNGMFSHEDTIARLTAKFVKPSKI.

The short motif at 253-255 (SKI) is the Microbody targeting signal element.

Belongs to the enoyl-CoA hydratase/isomerase family.

The protein resides in the peroxisome. This is an uncharacterized protein from Caenorhabditis elegans.